The primary structure comprises 753 residues: Photosystem I P700 chlorophyll a apoprotein A1 (753 aa).

Transmembrane regions (helical) follow at residues 72 to 95, 158 to 181, 197 to 221, 293 to 311, 350 to 373, 389 to 415, 437 to 459, and 534 to 552; these read IFSA…FHGA, LYCT…FHYH, MNHH…HVSL, TAHH…GHMY, WHAQ…HHMY, LSLF…IFMV, AIIS…LYVH, and FMVH…LILL. Positions 576 and 585 each coordinate [4Fe-4S] cluster. Helical transmembrane passes span 592 to 613 and 667 to 689; these read HVFL…HFSW and LSAY…MFLF. His678 provides a ligand contact to chlorophyll a'. Residues Met686 and Tyr694 each contribute to the chlorophyll a site. Trp695 contributes to the phylloquinone binding site. Residues 727–747 traverse the membrane as a helical segment; it reads AVGVAHYLLGGIVTTWAFFLA.

Belongs to the PsaA/PsaB family. The PsaA/B heterodimer binds the P700 chlorophyll special pair and subsequent electron acceptors. PSI consists of a core antenna complex that captures photons, and an electron transfer chain that converts photonic excitation into a charge separation. The cyanobacterial PSI reaction center is composed of one copy each of PsaA,B,C,D,E,F,I,J,K,L,M and X, and forms trimeric complexes. The cofactor is PSI electron transfer chain: 5 chlorophyll a, 1 chlorophyll a', 2 phylloquinones and 3 4Fe-4S clusters. PSI core antenna: 90 chlorophyll a, 22 carotenoids, 3 phospholipids and 1 galactolipid. P700 is a chlorophyll a/chlorophyll a' dimer, A0 is one or more chlorophyll a, A1 is one or both phylloquinones and FX is a shared 4Fe-4S iron-sulfur center..

It is found in the cellular thylakoid membrane. It carries out the reaction reduced [plastocyanin] + hnu + oxidized [2Fe-2S]-[ferredoxin] = oxidized [plastocyanin] + reduced [2Fe-2S]-[ferredoxin]. Its function is as follows. PsaA and PsaB bind P700, the primary electron donor of photosystem I (PSI), as well as the electron acceptors A0, A1 and FX. PSI is a plastocyanin/cytochrome c6-ferredoxin oxidoreductase, converting photonic excitation into a charge separation, which transfers an electron from the donor P700 chlorophyll pair to the spectroscopically characterized acceptors A0, A1, FX, FA and FB in turn. Oxidized P700 is reduced on the lumenal side of the thylakoid membrane by plastocyanin or cytochrome c6. This Trichodesmium erythraeum (strain IMS101) protein is Photosystem I P700 chlorophyll a apoprotein A1.